Here is a 276-residue protein sequence, read N- to C-terminus: Large ribosomal subunit protein uL2 (276 aa).

Disordered regions lie at residues 1–20 (MGIK…TTND) and 219–276 (TVRG…RRKK). Residues 7 to 20 (NPTTNGRRNMTTND) are compositionally biased toward polar residues.

This sequence belongs to the universal ribosomal protein uL2 family. As to quaternary structure, part of the 50S ribosomal subunit. Forms a bridge to the 30S subunit in the 70S ribosome.

In terms of biological role, one of the primary rRNA binding proteins. Required for association of the 30S and 50S subunits to form the 70S ribosome, for tRNA binding and peptide bond formation. It has been suggested to have peptidyltransferase activity; this is somewhat controversial. Makes several contacts with the 16S rRNA in the 70S ribosome. This Bacillus cereus (strain G9842) protein is Large ribosomal subunit protein uL2.